The primary structure comprises 66 residues: Large ribosomal subunit protein bL33c (66 aa).

Belongs to the bacterial ribosomal protein bL33 family.

Its subcellular location is the plastid. The protein localises to the chloroplast. The protein is Large ribosomal subunit protein bL33c of Crucihimalaya wallichii (Rock-cress).